Here is a 75-residue protein sequence, read N- to C-terminus: Sec-independent protein translocase protein TatA (75 aa).

Residues 1 to 21 traverse the membrane as a helical segment; it reads MGSFSIWHWLIVLVIVALVFG. Residues 44–75 are disordered; the sequence is KDANSDKPAEQVTQQKVADDTIDVQAKEKTNS.

It belongs to the TatA/E family. As to quaternary structure, the Tat system comprises two distinct complexes: a TatABC complex, containing multiple copies of TatA, TatB and TatC subunits, and a separate TatA complex, containing only TatA subunits. Substrates initially bind to the TatABC complex, which probably triggers association of the separate TatA complex to form the active translocon.

Its subcellular location is the cell inner membrane. Functionally, part of the twin-arginine translocation (Tat) system that transports large folded proteins containing a characteristic twin-arginine motif in their signal peptide across membranes. TatA could form the protein-conducting channel of the Tat system. This chain is Sec-independent protein translocase protein TatA, found in Bordetella petrii (strain ATCC BAA-461 / DSM 12804 / CCUG 43448).